A 223-amino-acid polypeptide reads, in one-letter code: DNA mismatch repair protein MutH (223 aa).

Belongs to the MutH family.

Its subcellular location is the cytoplasm. Its function is as follows. Sequence-specific endonuclease that cleaves unmethylated GATC sequences. It is involved in DNA mismatch repair. This Shewanella sp. (strain ANA-3) protein is DNA mismatch repair protein MutH.